Here is a 620-residue protein sequence, read N- to C-terminus: E3 ubiquitin-protein ligase AMFR (620 aa).

7 helical membrane-spanning segments follow: residues 75–95, 115–135, 138–158, 179–199, 201–221, 247–267, and 269–289; these read LFVW…GKVI, FWNF…VQRV, VVLW…VQLC, VLAL…LCAL, GHIH…LVTV, SSYI…LDLM, and HIHM…VIFM. An RING-type; atypical zinc finger spans residues 334-372; that stretch reads CAICWDSMTTARKLPCGHLFHNSCLRSWLEQDTSCPTCR. The CUE domain occupies 449 to 491; sequence QLNGMAHQIQEMFPQVPYHLILQDLQLTRSVEVTTDNILEGRI. The segment covering 510-526 has biased composition (low complexity); the sequence is ASEDGAGASSGSEVAAP. 2 disordered regions span residues 510–544 and 569–598; these read ASED…SADE and PEDG…DSVT. Residues 531–544 are compositionally biased toward basic and acidic residues; that stretch reads FEVRGSRFSKSADE. Residues 581 to 595 show a composition bias toward acidic residues; it reads DNDDSVPSIEDEDSD.

As to expression, widely expressed.

It is found in the endoplasmic reticulum membrane. It catalyses the reaction [E2 ubiquitin-conjugating enzyme]-S-ubiquitinyl-L-cysteine + [acceptor protein]-L-cysteine = [E2 ubiquitin-conjugating enzyme]-L-cysteine + [acceptor protein]-S-ubiquitinyl-L-cysteine.. It participates in protein modification; protein ubiquitination. In terms of biological role, E3 ubiquitin-protein ligase that mediates the polyubiquitination of lysine and cysteine residues on target proteins. May participate in the final step of endoplasmic reticulum-associated degradation (ERAD). Required for proper lipid homeostasis. The polypeptide is E3 ubiquitin-protein ligase AMFR (Danio rerio (Zebrafish)).